A 65-amino-acid chain; its full sequence is MSDKCGHCDCADKSQCVKKGTSYGVVIVDAEKSHFEMAEEVGYEENDGKCKCTTGCSCAGCNCGK.

Belongs to the metallothionein superfamily. Type 15 family.

Metallothioneins have a high content of cysteine residues that bind various heavy metals. The sequence is that of Metallothionein-like protein 3B (MT3B) from Oryza sativa subsp. indica (Rice).